Consider the following 397-residue polypeptide: Acetate kinase (397 aa).

Residue N8 participates in Mg(2+) binding. K15 contacts ATP. Substrate is bound at residue R89. D146 functions as the Proton donor/acceptor in the catalytic mechanism. ATP contacts are provided by residues 206-210 (HLGNG), 281-283 (DLR), and 329-333 (GVGEN). E382 serves as a coordination point for Mg(2+).

Belongs to the acetokinase family. In terms of assembly, homodimer. The cofactor is Mg(2+). Mn(2+) serves as cofactor.

It localises to the cytoplasm. It catalyses the reaction acetate + ATP = acetyl phosphate + ADP. Its pathway is metabolic intermediate biosynthesis; acetyl-CoA biosynthesis; acetyl-CoA from acetate: step 1/2. Its function is as follows. Catalyzes the formation of acetyl phosphate from acetate and ATP. Can also catalyze the reverse reaction. The protein is Acetate kinase of Bacillus cereus (strain ATCC 10987 / NRS 248).